A 99-amino-acid chain; its full sequence is NADH-ubiquinone oxidoreductase chain 4L (99 aa).

3 helical membrane-spanning segments follow: residues 4-24 (MFLM…VFVS), 29-49 (LLST…FLFF), and 63-83 (FFLT…VSMI).

This sequence belongs to the complex I subunit 4L family.

It localises to the mitochondrion membrane. The catalysed reaction is a ubiquinone + NADH + 5 H(+)(in) = a ubiquinol + NAD(+) + 4 H(+)(out). Core subunit of the mitochondrial membrane respiratory chain NADH dehydrogenase (Complex I) that is believed to belong to the minimal assembly required for catalysis. Complex I functions in the transfer of electrons from NADH to the respiratory chain. The immediate electron acceptor for the enzyme is believed to be ubiquinone. In Anopheles gambiae (African malaria mosquito), this protein is NADH-ubiquinone oxidoreductase chain 4L (mt:ND4L).